The following is a 306-amino-acid chain: Phosphoribosylaminoimidazole-succinocarboxamide synthase (306 aa).

Ser-2 bears the N-acetylserine mark.

It belongs to the SAICAR synthetase family. In terms of assembly, monomer.

It catalyses the reaction 5-amino-1-(5-phospho-D-ribosyl)imidazole-4-carboxylate + L-aspartate + ATP = (2S)-2-[5-amino-1-(5-phospho-beta-D-ribosyl)imidazole-4-carboxamido]succinate + ADP + phosphate + 2 H(+). It participates in purine metabolism; IMP biosynthesis via de novo pathway; 5-amino-1-(5-phospho-D-ribosyl)imidazole-4-carboxamide from 5-amino-1-(5-phospho-D-ribosyl)imidazole-4-carboxylate: step 1/2. In terms of biological role, catalyzes the reaction of 4-carboxy-5-aminoimidazole ribotide (CAIR) and aspartic acid with the formation of N-succinyl-5-amino-imidazole-4-carboxamide ribotide (SAICAR) in the purine biosynthesis pathway. The polypeptide is Phosphoribosylaminoimidazole-succinocarboxamide synthase (ADE1) (Saccharomyces cerevisiae (strain ATCC 204508 / S288c) (Baker's yeast)).